The primary structure comprises 94 residues: uncharacterized protein (94 aa).

In terms of tissue distribution, specifically expressed in retina and retinal pigment epithelium.

This is an uncharacterized protein from Homo sapiens (Human).